The following is a 756-amino-acid chain: Polyribonucleotide nucleotidyltransferase (756 aa).

Mg(2+) contacts are provided by Asp527 and Asp533. One can recognise a KH domain in the interval 593-652; that stretch reads PRITTIKVPVDKIGEVIGPKGKMINSITEETGASISIEDDGTVFVGASNGEAAQAAIDKI. In terms of domain architecture, S1 motif spans 664–733; the sequence is GERFLGTVVK…NRGKISLVLV (70 aa).

The protein belongs to the polyribonucleotide nucleotidyltransferase family. The cofactor is Mg(2+).

It localises to the cytoplasm. It catalyses the reaction RNA(n+1) + phosphate = RNA(n) + a ribonucleoside 5'-diphosphate. In terms of biological role, involved in mRNA degradation. Catalyzes the phosphorolysis of single-stranded polyribonucleotides processively in the 3'- to 5'-direction. In Mycolicibacterium gilvum (strain PYR-GCK) (Mycobacterium gilvum (strain PYR-GCK)), this protein is Polyribonucleotide nucleotidyltransferase.